The sequence spans 208 residues: NAD(P)H dehydrogenase (quinone) (208 aa).

The region spanning 4-199 (VNVIFHSIHG…AMARYQGRHV (196 aa)) is the Flavodoxin-like domain. Residues 10–15 (SIHGHT) and 87–89 (TRY) each bind FMN. Trp-107 lines the substrate pocket. Residues 122–128 (SSGTQHG) and His-143 each bind FMN.

The protein belongs to the WrbA family. FMN serves as cofactor.

The enzyme catalyses a quinone + NADH + H(+) = a quinol + NAD(+). It carries out the reaction a quinone + NADPH + H(+) = a quinol + NADP(+). This chain is NAD(P)H dehydrogenase (quinone), found in Methanosarcina barkeri (strain Fusaro / DSM 804).